The following is a 260-amino-acid chain: Hydroxyethylthiazole kinase 1 (260 aa).

Met-39 contributes to the substrate binding site. 2 residues coordinate ATP: Arg-115 and Thr-160. Gly-187 contacts substrate.

This sequence belongs to the Thz kinase family. Mg(2+) is required as a cofactor.

It carries out the reaction 5-(2-hydroxyethyl)-4-methylthiazole + ATP = 4-methyl-5-(2-phosphooxyethyl)-thiazole + ADP + H(+). The protein operates within cofactor biosynthesis; thiamine diphosphate biosynthesis; 4-methyl-5-(2-phosphoethyl)-thiazole from 5-(2-hydroxyethyl)-4-methylthiazole: step 1/1. Its function is as follows. Catalyzes the phosphorylation of the hydroxyl group of 4-methyl-5-beta-hydroxyethylthiazole (THZ). The chain is Hydroxyethylthiazole kinase 1 from Streptococcus pneumoniae (strain P1031).